A 164-amino-acid chain; its full sequence is Biogenesis of lysosome-related organelles complex 1 subunit 5 (164 aa).

Residues 36–91 are a coiled coil; the sequence is EGKRNDRELERLRESEQKIRQVQEEIPKCITESVKLKDLLEELKVAREKCHEILVK.

Belongs to the BLOC1S5 family. As to quaternary structure, component of the biogenesis of lysosome-related organelles complex 1 (BLOC-1).

Functionally, component of the BLOC-1 complex, a complex that is required for normal biogenesis of lysosome-related organelles (LRO). May play a role in intracellular vesicle trafficking. The sequence is that of Biogenesis of lysosome-related organelles complex 1 subunit 5 (bloc1s5) from Nematostella vectensis (Starlet sea anemone).